The chain runs to 501 residues: Alpha-internexin (501 aa).

Positions 1–87 (MSFGSEHYLC…SQAAARTNEY (87 aa)) are head. At serine 72 the chain carries Phosphoserine. A coil 1A region spans residues 88-129 (KIIRTNEKEQLQGLNDRFAVFIEKVHQLETQNRALEAELAAL). The region spanning 94 to 407 (EKEQLQGLND…KLLEGEETRF (314 aa)) is the IF rod domain. The segment at 130–142 (RQRHAEPSRVGEL) is linker 1. The segment at 143-238 (FQRELRELRA…QVHDEEVAEL (96 aa)) is coil 1B. At serine 219 the chain carries Phosphoserine. The linker 2 stretch occupies residues 239-262 (LATLQASSQAAAEVDVAVAKPDLT). The interval 263–408 (SALREIRAQY…LLEGEETRFS (146 aa)) is coil 2. Position 290 is an N6-acetyllysine (lysine 290). 2 positions are modified to phosphoserine: serine 335 and serine 498. Residues 409-501 (TGGLSISGLN…EESTSSSQKM (93 aa)) form a tail region. Residues 441 to 501 (SAGLSLKKEE…EESTSSSQKM (61 aa)) form a disordered region. Residues 488 to 501 (KSATEESTSSSQKM) show a composition bias toward polar residues.

It belongs to the intermediate filament family. As to quaternary structure, forms homodimers (in vitro). Forms heterodimers with NEFL, NEFM or NEFH (in vitro). In terms of processing, O-glycosylated.

In terms of biological role, class-IV neuronal intermediate filament that is able to self-assemble. It is involved in the morphogenesis of neurons. It may form an independent structural network without the involvement of other neurofilaments or it may cooperate with NEFL to form the filamentous backbone to which NEFM and NEFH attach to form the cross-bridges. May also cooperate with the neuronal intermediate filament protein PRPH to form filamentous networks. In Mus musculus (Mouse), this protein is Alpha-internexin (Ina).